We begin with the raw amino-acid sequence, 389 residues long: WAT1-related protein At1g21890 (389 aa).

The next 10 membrane-spanning stretches (helical) occupy residues 13–33, 40–60, 73–93, 102–122, 142–162, 191–211, 225–245, 260–280, 287–307, and 312–332; these read LAMISMQFGYAGMYIITMVSL, YVLAVYRHAIATAVIAPFALF, IFLQIALLGFIEPVLDQNLYY, TFASATANVLPAITFVLAIIF, VITVSGALLMTLYKGPIVDFI, WIPGTLMLLGRTFGWAGFFIL, LTTLICLMGTLEGTAVSLVTV, FAAAYSGVICSGVAYYVQGVV, VFVATFNPLCVVITAALGVVV, and IHLGSVIGTLFIIVGLYTVVW. 2 EamA domains span residues 23 to 150 and 205 to 331; these read AGMY…GALL and WAGF…YTVV. Positions 339 to 361 are disordered; sequence RMTDDDEDCKGLPIKSPVKPVDT.

Belongs to the drug/metabolite transporter (DMT) superfamily. Plant drug/metabolite exporter (P-DME) (TC 2.A.7.4) family.

It is found in the membrane. This is WAT1-related protein At1g21890 from Arabidopsis thaliana (Mouse-ear cress).